Consider the following 257-residue polypeptide: Transcriptional regulatory protein TrcR (257 aa).

In terms of domain architecture, Response regulatory spans 33-147; the sequence is RVLLVDDEPA…ELVARLRGLL (115 aa). Asp82 carries the post-translational modification 4-aspartylphosphate. Residues 158 to 255 constitute a DNA-binding region (ompR/PhoB-type); sequence DEALRVGDLT…VRGIGYMLRP (98 aa).

In terms of processing, phosphorylated by TrcS.

Its function is as follows. Member of the two-component regulatory system TrcS/TrcR. Activates its own expression by binding specifically to the AT-rich sequence of the trcR promoter region. Also negatively regulates the expression of Rv1057 by binding to an AT-rich sequences within the Rv1057 upstream sequence. The TrcR-TrcS regulatory system may act as a transition regulatory system involved in adapting to an intracellular environment and transitioning from latency to reactivation. The chain is Transcriptional regulatory protein TrcR from Mycobacterium tuberculosis (strain ATCC 25618 / H37Rv).